The following is a 278-amino-acid chain: MQIVLVSGLSGSGKSIATAVLEDVGYYCVDNLPLAMLQPLVEYLKQEGYARVAIAIDARSGASFAQLPQIAENLRAQGADLRVIFLEAKTLSLVKRFSETRRRHPLSSDTVSLPEAIQLERETLADVAPLAHRIDTSDLSASALRLWIKDLVGPDRSRITLLFESFGFKHGIPLDADLVFDVRCLPNPHYVEELRPFTGRDPGVREFLEASPDAMALLADIRGFVENWLPCFIRDHRAYLTVAIGCTGGRHRSVYFAETLAAAFQAREQVLVRHRELS.

8-15 is a binding site for ATP; it reads GLSGSGKS. 57–60 is a binding site for GTP; that stretch reads DARS.

Belongs to the RapZ-like family.

Functionally, displays ATPase and GTPase activities. The sequence is that of Nucleotide-binding protein Tbd_0529 from Thiobacillus denitrificans (strain ATCC 25259 / T1).